Reading from the N-terminus, the 293-residue chain is MVDSVYRTRSLGVAAEGIPDQYADGEAARVWQLYIGDTRSRTAEYKAWLLGLLRQHGCHRVLDVACGTGVDSIMLVEEGFSVTSVDASDKMLKYALKERWNRRKEPAFDKWVIEEANWLTLDKDVPAGDGFDAVICLGNSFAHLPDSKGDQSEHRLALKNIASMVRPGGLLVIDHRNYDYILSTGCAPPGKNIYYKSDLTKDITTSVLTVNNKAHMVTLDYTVQVPGAGRDGAPGFSKFRLSYYPHCLASFTELVQEAFGGRCQHSVLGDFKPYRPGQAYVPCYFIHVLKKTG.

At Val-2 the chain carries N-acetylvaline. The (6S)-5-methyl-5,6,7,8-tetrahydrofolate site is built by Ser-4 and Tyr-6. Residue Ser-10 is modified to Phosphoserine. Tyr-22, Trp-31, Tyr-34, and Arg-41 together coordinate S-adenosyl-L-methionine. Residue Tyr-34 is modified to Phosphotyrosine. Lys-46 carries the N6-succinyllysine modification. S-adenosyl-L-methionine-binding positions include Ala-65, 86–88, 117–118, 137–140, and Arg-176; these read DAS, NW, and LGNS. N6-succinyllysine is present on residues Lys-191, Lys-196, and Lys-201. His-215 serves as a coordination point for (6S)-5-methyl-5,6,7,8-tetrahydrofolate. Tyr-221 contacts S-adenosyl-L-methionine. Residue Arg-240 coordinates (6S)-5-methyl-5,6,7,8-tetrahydrofolate.

Belongs to the class I-like SAM-binding methyltransferase superfamily. Glycine N-methyltransferase family. Homotetramer. Abundant in liver.

Its subcellular location is the cytoplasm. It carries out the reaction glycine + S-adenosyl-L-methionine = sarcosine + S-adenosyl-L-homocysteine + H(+). Its activity is regulated as follows. Inhibited by 5-methyltetrahydrofolate monoglutamate and by 5-methyltetrahydrofolate pentaglutamate, inhibition is much more effective by the pentaglutamate form than by the monoglutamate form. Two molecules of 5-methyltetrahydrofolate are bound per tetramer. The binding sites are localized between subunits. Inhibitor binding may preclude movements of the polypeptide chain that are necessary for enzyme activity. Functionally, catalyzes the methylation of glycine by using S-adenosylmethionine (AdoMet) to form N-methylglycine (sarcosine) with the concomitant production of S-adenosylhomocysteine (AdoHcy), a reaction regulated by the binding of 5-methyltetrahydrofolate. Possible crucial role in the regulation of tissue concentration of AdoMet and of metabolism of methionine. This is Glycine N-methyltransferase (Gnmt) from Rattus norvegicus (Rat).